Consider the following 22-residue polypeptide: Fuctinin-1 (22 aa).

Positions 1–22 (SASPGLPKGEKEQQEAIEHIDE) are disordered. Residues 8–22 (KGEKEQQEAIEHIDE) are compositionally biased toward basic and acidic residues.

To human SET/PHAPII protein. In terms of assembly, oligomer.

It localises to the cytoplasm. Its function is as follows. Has a role in the physiological regulation of fucosylation processes. The chain is Fuctinin-1 from Rattus norvegicus (Rat).